A 65-amino-acid polypeptide reads, in one-letter code: MPKMKTNSGAKKRFALTGSGKIKRKHAFKSHILTKKTKKQKRNLTHTGLVASVDVSNVKQMLCMK.

It belongs to the bacterial ribosomal protein bL35 family.

The sequence is that of Large ribosomal subunit protein bL35 from Parabacteroides distasonis (strain ATCC 8503 / DSM 20701 / CIP 104284 / JCM 5825 / NCTC 11152).